Reading from the N-terminus, the 38-residue chain is MYCTRCVFAGARGGERSPAAVLSVGKIPAPIVISGYLC.

This is an uncharacterized protein from Treponema pallidum (strain Nichols).